Consider the following 200-residue polypeptide: Dephospho-CoA kinase (200 aa).

A DPCK domain is found at 2–200; sequence LIAVVGKAGV…CHHGHYQTPK (199 aa). Position 10 to 15 (10 to 15) interacts with ATP; it reads GVGKTT.

The protein belongs to the CoaE family.

Its subcellular location is the cytoplasm. The enzyme catalyses 3'-dephospho-CoA + ATP = ADP + CoA + H(+). It participates in cofactor biosynthesis; coenzyme A biosynthesis; CoA from (R)-pantothenate: step 5/5. In terms of biological role, catalyzes the phosphorylation of the 3'-hydroxyl group of dephosphocoenzyme A to form coenzyme A. The polypeptide is Dephospho-CoA kinase (Mycoplasma pneumoniae (strain ATCC 29342 / M129 / Subtype 1) (Mycoplasmoides pneumoniae)).